A 508-amino-acid polypeptide reads, in one-letter code: U4/U6 small nuclear ribonucleoprotein Prp31 (508 aa).

The segment at 1–45 (MSLADELLADLEEAGEEDGLYPGGEEGESDGEPGERQVDGGLEDI) is disordered. Over residues 7–32 (LLADLEEAGEEDGLYPGGEEGESDGE) the composition is skewed to acidic residues. Coiled coils occupy residues 96–131 (EADP…KYSK) and 192–226 (DDEL…MSFI). Residues 226–344 (IAPNLSIIVG…IERKFDKWQE (119 aa)) enclose the Nop domain. Disordered stretches follow at residues 345–368 (PPPV…RGGR) and 442–461 (QSMT…GTSS). Positions 362 to 375 (RKKRGGRRYRKMKE) match the Nuclear localization signal (NLS) motif.

This sequence belongs to the PRP31 family. Identified in the spliceosome B complex. Component of the U4/U6-U5 tri-snRNP complex. Component of some MLL1/MLL complex.

It localises to the nucleus. It is found in the nucleus speckle. Its subcellular location is the cajal body. In terms of biological role, involved in pre-mRNA splicing as component of the spliceosome. Required for the assembly of the U4/U5/U6 tri-snRNP complex, one of the building blocks of the spliceosome. The chain is U4/U6 small nuclear ribonucleoprotein Prp31 (prpf31) from Danio rerio (Zebrafish).